A 235-amino-acid chain; its full sequence is Small ribosomal subunit protein uS3 (235 aa).

Positions 39–107 (IRQYVFKALP…DVSLNIVEIR (69 aa)) constitute a KH type-2 domain.

The protein belongs to the universal ribosomal protein uS3 family. Part of the 30S ribosomal subunit. Forms a tight complex with proteins S10 and S14.

Functionally, binds the lower part of the 30S subunit head. Binds mRNA in the 70S ribosome, positioning it for translation. The sequence is that of Small ribosomal subunit protein uS3 from Sphingopyxis alaskensis (strain DSM 13593 / LMG 18877 / RB2256) (Sphingomonas alaskensis).